The primary structure comprises 713 residues: Phosphoribosylformylglycinamidine synthase subunit PurL (713 aa).

His-32 is a catalytic residue. Tyr-35 contributes to the ATP binding site. Glu-76 is a Mg(2+) binding site. Residues Ser-77 to His-80 and Arg-99 contribute to the substrate site. His-78 acts as the Proton acceptor in catalysis. A Mg(2+)-binding site is contributed by Asp-100. Position 224 (Gln-224) interacts with substrate. Asp-252 lines the Mg(2+) pocket. A substrate-binding site is contributed by Glu-296–Gln-298. Asp-471 and Gly-508 together coordinate ATP. Residue Asn-509 participates in Mg(2+) binding. Ser-511 contacts substrate.

Belongs to the FGAMS family. In terms of assembly, monomer. Part of the FGAM synthase complex composed of 1 PurL, 1 PurQ and 2 PurS subunits.

Its subcellular location is the cytoplasm. It carries out the reaction N(2)-formyl-N(1)-(5-phospho-beta-D-ribosyl)glycinamide + L-glutamine + ATP + H2O = 2-formamido-N(1)-(5-O-phospho-beta-D-ribosyl)acetamidine + L-glutamate + ADP + phosphate + H(+). It participates in purine metabolism; IMP biosynthesis via de novo pathway; 5-amino-1-(5-phospho-D-ribosyl)imidazole from N(2)-formyl-N(1)-(5-phospho-D-ribosyl)glycinamide: step 1/2. Part of the phosphoribosylformylglycinamidine synthase complex involved in the purines biosynthetic pathway. Catalyzes the ATP-dependent conversion of formylglycinamide ribonucleotide (FGAR) and glutamine to yield formylglycinamidine ribonucleotide (FGAM) and glutamate. The FGAM synthase complex is composed of three subunits. PurQ produces an ammonia molecule by converting glutamine to glutamate. PurL transfers the ammonia molecule to FGAR to form FGAM in an ATP-dependent manner. PurS interacts with PurQ and PurL and is thought to assist in the transfer of the ammonia molecule from PurQ to PurL. The chain is Phosphoribosylformylglycinamidine synthase subunit PurL from Thermococcus kodakarensis (strain ATCC BAA-918 / JCM 12380 / KOD1) (Pyrococcus kodakaraensis (strain KOD1)).